We begin with the raw amino-acid sequence, 337 residues long: Phytanoyl-CoA dioxygenase, peroxisomal (337 aa).

A peroxisome-targeting transit peptide spans 1 to 30 (MDRNRASARLTVLLRHLGCRSAGTIIAHHT). N6-succinyllysine occurs at positions 59 and 108. 2-oxoglutarate contacts are provided by residues lysine 120, methionine 157, 175–177 (HQD), and tryptophan 193. Residues histidine 175 and aspartate 177 each coordinate Fe cation. Position 252 is an N6-succinyllysine (lysine 252). Residue histidine 264 coordinates Fe cation. 2-oxoglutarate-binding residues include serine 266 and arginine 275.

Belongs to the PhyH family. Interacts with FKBP52 and PHYHIP. Fe cation serves as cofactor. It depends on L-ascorbate as a cofactor. Requires ATP as cofactor. Mg(2+) is required as a cofactor.

It localises to the peroxisome. The catalysed reaction is phytanoyl-CoA + 2-oxoglutarate + O2 = 2-hydroxyphytanoyl-CoA + succinate + CO2. It carries out the reaction 3-methylhexadecanoyl-CoA + 2-oxoglutarate + O2 = 2-hydroxy-3-methylhexadecanoyl-CoA + succinate + CO2. It catalyses the reaction hexadecanoyl-CoA + 2-oxoglutarate + O2 = 2-hydroxyhexadecanoyl-CoA + succinate + CO2. The enzyme catalyses octanoyl-CoA + 2-oxoglutarate + O2 = 2-hydroxyoctanoyl-CoA + succinate + CO2. The catalysed reaction is decanoyl-CoA + 2-oxoglutarate + O2 = 2-hydroxydecanoyl-CoA + succinate + CO2. It carries out the reaction 3-methylbutanoyl-CoA + 2-oxoglutarate + O2 = 2-hydroxy-3-methylbutanoyl-CoA + succinate + CO2. It catalyses the reaction heptadecanoyl-CoA + 2-oxoglutarate + O2 = 2-hydroxyheptadecanoyl-CoA + succinate + CO2. The enzyme catalyses eicosanoyl-CoA + 2-oxoglutarate + O2 = 2-hydroxyeicosanoyl-CoA + succinate + CO2. The catalysed reaction is octadecanoyl-CoA + 2-oxoglutarate + O2 = 2-hydroxyoctadecanoyl-CoA + succinate + CO2. It carries out the reaction dodecanoyl-CoA + 2-oxoglutarate + O2 = 2-hydroxydodecanoyl-CoA + succinate + CO2. It catalyses the reaction tetradecanoyl-CoA + 2-oxoglutarate + O2 = 2-hydroxytetradecanoyl-CoA + succinate + CO2. The enzyme catalyses hexanoyl-CoA + 2-oxoglutarate + O2 = 2-hydroxyhexanoyl-CoA + succinate + CO2. The catalysed reaction is butanoyl-CoA + 2-oxoglutarate + O2 = 2-hydroxybutanoyl-CoA + succinate + CO2. It carries out the reaction 3-methylnonanoyl-CoA + 2-oxoglutarate + O2 = 2-hydroxy-3-methylnonanoyl-CoA + succinate + CO2. It catalyses the reaction 3-methylundecanoyl-CoA + 2-oxoglutarate + O2 = 2-hydroxy-3-methylundecanoyl-CoA + succinate + CO2. The enzyme catalyses 3-methyldodecanoyl-CoA + 2-oxoglutarate + O2 = 2-hydroxy-3-methyldodecanoyl-CoA + succinate + CO2. Its pathway is lipid metabolism; fatty acid metabolism. Functionally, catalyzes the 2-hydroxylation of not only racemic phytanoyl-CoA and the isomers of 3-methylhexadecanoyl-CoA, but also a variety of other mono- branched 3-methylacyl-CoA esters (with a chain length of at least seven carbon atoms) and straight-chain acyl-CoA esters (with a chain length longer than four carbon atoms). Does not hydroxylate long and very long straight chain acyl-CoAs or 2-methyl-and 4-methyl-branched acyl-CoAs. This is Phytanoyl-CoA dioxygenase, peroxisomal (PHYH) from Bos taurus (Bovine).